A 251-amino-acid chain; its full sequence is uncharacterized protein (251 aa).

The signal sequence occupies residues 1-18 (MRILIILSIILCSFFARA).

Belongs to the MlaA family.

This is an uncharacterized protein from Rickettsia typhi (strain ATCC VR-144 / Wilmington).